The primary structure comprises 526 residues: Ubiquitin carboxyl-terminal hydrolase 17-like protein A (526 aa).

The segment at 1-21 (MVVALSFPEADPALSSPDAPE) is disordered. The region spanning 51–348 (CGLQNTGNSC…NAYVLFYVQQ (298 aa)) is the USP domain. The active-site Nucleophile is Cys60. His307 functions as the Proton acceptor in the catalytic mechanism. The span at 374 to 385 (KKSRRKKHKKKS) shows a compositional bias: basic residues. Disordered stretches follow at residues 374 to 394 (KKSR…LGEP) and 465 to 494 (RSTA…SQGP). Residues 473-486 (DSPDKENQPLHNAD) are compositionally biased toward basic and acidic residues.

It belongs to the peptidase C19 family. In terms of processing, polyubiquitinated; ubiquitination leads to its subsequent degradation. Expressed in hematopoietic progenitor cell lines Ba/F3 and FDCP1. Not detected in brain, lung, liver, kidney, thymus, spleen and bone marrow.

It carries out the reaction Thiol-dependent hydrolysis of ester, thioester, amide, peptide and isopeptide bonds formed by the C-terminal Gly of ubiquitin (a 76-residue protein attached to proteins as an intracellular targeting signal).. In terms of biological role, deubiquitinating enzyme that removes conjugated ubiquitin from specific proteins to regulate different cellular processes. Has deubiquitinating enzyme activity for DNAH5, suggesting a role in the regulation of DNAH5 degradation by the ubiquitin-proteasome pathway. Has growth-suppressing activity; induces arrest in G1 phase upon controlled expression. This chain is Ubiquitin carboxyl-terminal hydrolase 17-like protein A (Usp17la), found in Mus musculus (Mouse).